The sequence spans 334 residues: DNA polymerase III subunit delta' (334 aa).

As to quaternary structure, the DNA polymerase III holoenzyme complex contains at least 10 different subunits organized into 3 functionally essential subassemblies: the Pol III core, the beta sliding clamp processivity factor and the clamp-loading complex. The Pol III core (subunits alpha, epsilon and theta) contains the polymerase and the 3'-5' exonuclease proofreading activities. The polymerase is tethered to the template via the dimeric beta sliding clamp processivity factor. The clamp-loading complex (also called gamma complex) assembles the beta sliding clamp onto the primed template and plays a central role in the organization and communication at the replication fork. The clamp-loading complex contains delta, delta', psi and chi, and 3 copies of either or both of two different DnaX proteins, gamma and tau. The DNA replisome complex has a single clamp loader (3 tau and 1 each of delta, delta', psi and chi subunits) which binds 3 Pol III cores (1 core on the leading strand and 2 on the lagging strand) each with a beta sliding clamp dimer. Additional proteins in the replisome are other copies of gamma, psi and chi, Ssb, DNA helicase and RNA primase. The clamp loader hydrolyzes ATP to assemble the beta processivity factor onto the primed template and plays a central role in the organization and communication at the replication fork; the minimal complex to load the beta sliding clamp on DNA is delta, delta', gamma.

The catalysed reaction is DNA(n) + a 2'-deoxyribonucleoside 5'-triphosphate = DNA(n+1) + diphosphate. Part of the beta sliding clamp loading complex, which hydrolyzes ATP to load the beta clamp onto primed DNA to form the DNA replication pre-initiation complex. DNA polymerase III is a complex, multichain enzyme responsible for most of the replicative synthesis in bacteria. This DNA polymerase also exhibits 3' to 5' exonuclease activity. The gamma complex (gamma(3),delta,delta') is thought to load beta dimers onto DNA by binding ATP which alters the complex's conformation so it can bind beta sliding clamp dimers and open them at one interface. Primed DNA is recognized, ATP is hydrolyzed releasing the gamma complex and closing the beta sliding clamp ring around the primed DNA. This is DNA polymerase III subunit delta' (holB) from Escherichia coli (strain K12).